Reading from the N-terminus, the 80-residue chain is Cell division protein ZapB (80 aa).

A coiled-coil region spans residues 3 to 80 (FEVLEKLEAK…SLLGKMEDVE (78 aa)).

This sequence belongs to the ZapB family. In terms of assembly, homodimer. The ends of the coiled-coil dimer bind to each other, forming polymers. Interacts with FtsZ.

The protein resides in the cytoplasm. Functionally, non-essential, abundant cell division factor that is required for proper Z-ring formation. It is recruited early to the divisome by direct interaction with FtsZ, stimulating Z-ring assembly and thereby promoting cell division earlier in the cell cycle. Its recruitment to the Z-ring requires functional FtsA or ZipA. The polypeptide is Cell division protein ZapB (Vibrio cholerae serotype O1 (strain ATCC 39541 / Classical Ogawa 395 / O395)).